The sequence spans 147 residues: Hemoglobin subunit beta (147 aa).

Residues 3–147 form the Globin domain; it reads EWTDKERTII…VVSALGKQYH (145 aa). 2 residues coordinate heme b: H64 and H93.

The protein belongs to the globin family. Heterotetramer of two alpha chains and two beta chains. In terms of tissue distribution, red blood cells.

Involved in oxygen transport from gills to the various peripheral tissues. The polypeptide is Hemoglobin subunit beta (Trematomus newnesi (Dusky notothen)).